The chain runs to 398 residues: Tyrosine--tRNA ligase (398 aa).

The 'HIGH' region signature appears at proline 48 to histidine 57. A 'KMSKS' region motif is present at residues lysine 235 to serine 239. Residue lysine 238 coordinates ATP. Residues valine 334 to leucine 398 form the S4 RNA-binding domain.

This sequence belongs to the class-I aminoacyl-tRNA synthetase family. TyrS type 2 subfamily. In terms of assembly, homodimer.

Its subcellular location is the cytoplasm. It catalyses the reaction tRNA(Tyr) + L-tyrosine + ATP = L-tyrosyl-tRNA(Tyr) + AMP + diphosphate + H(+). Its function is as follows. Catalyzes the attachment of tyrosine to tRNA(Tyr) in a two-step reaction: tyrosine is first activated by ATP to form Tyr-AMP and then transferred to the acceptor end of tRNA(Tyr). This Trichormus variabilis (strain ATCC 29413 / PCC 7937) (Anabaena variabilis) protein is Tyrosine--tRNA ligase.